Reading from the N-terminus, the 1807-residue chain is Nucleoporin nup189 (1807 aa).

A disordered region spans residues 1–118 (MFGQNNSSGF…SGGGLFGSNT (118 aa)). GLFG repeat units lie at residues 26–29 (GLFG) and 66–69 (GLFG). Over residues 29–61 (GSNSNTPGNTLFGSQNTSTTGFGQNTTQPLFGS) the composition is skewed to polar residues. Positions 62-77 (NTNGGLFGNRNNTTTT) are enriched in low complexity. The segment covering 78–90 (GGTGFGMSSGTGM) has biased composition (gly residues). Polar residues predominate over residues 93–108 (QSNTPAFGGTNNATNP). 10 GLFG repeats span residues 112–115 (GLFG), 152–155 (GLFG), 177–180 (GLFG), 308–311 (GLFG), 335–338 (GLFG), 350–353 (GLFG), 381–384 (GLFG), 399–402 (GLFG), 435–438 (GLFG), and 521–524 (GLFG). A compositionally biased stretch (polar residues) spans 565 to 584 (PGTGLFGSTQTNNATSNTGT). Residues 565 to 685 (PGTGLFGSTQ…SSTTSQVAPT (121 aa)) are disordered. GLFG repeat units lie at residues 585 to 588 (GLFG), 611 to 614 (GLFG), 627 to 630 (GLFG), and 646 to 649 (GLFG). The segment covering 588–600 (GSNNANTTNTGGS) has biased composition (low complexity). The segment covering 603 to 644 (NKPSTTTGGLFGNTTAQQPSTTTSGLFGASNTNNQAQTSNFG) has biased composition (polar residues). A compositionally biased stretch (low complexity) spans 653 to 663 (AGQQQQPLQAS). Over residues 664 to 685 (IDQNPYGNNPLFSSTTSQVAPT) the composition is skewed to polar residues. The residue at position 724 (Ser-724) is a Phosphoserine. The segment at 785–814 (QNGVKNGNDAKSDSKVQEKAPQNEADGSLK) is disordered. Basic and acidic residues predominate over residues 792 to 802 (NDAKSDSKVQE). Positions 822–963 (SDDYWMKPSI…GKWIFKVQHF (142 aa)) constitute a Peptidase S59 domain. A disordered region spans residues 974-1020 (EENDMSSTSNEAGNLKKYDQPNLKVSGKNDSFVTHHTPGAFPNDSKN). Position 1051 is a phosphoserine (Ser-1051). A disordered region spans residues 1082–1104 (KENNVPLSEDDLSNSSESSNESV). Over residues 1094 to 1104 (SNSSESSNESV) the composition is skewed to low complexity.

This sequence belongs to the nucleoporin GLFG family. Interacts (via G-L-F-G repeats) with rpn15/dss1. Interacts with raf1. As to quaternary structure, interacts with ned1. Post-translationally, nup189 is autocatalytically cleaved in nup98 and nup96.

The protein localises to the nucleus. Its subcellular location is the nuclear pore complex. Its function is as follows. Functions as a component of the nuclear pore complex (NPC). NPC components, collectively referred to as nucleoporins (NUPs), can play the role of both NPC structural components and of docking or interaction partners for transiently associated nuclear transport factors. Active directional transport is assured by both, a Phe-Gly (FG) repeat affinity gradient for these transport factors across the NPC and a transport cofactor concentration gradient across the nuclear envelope. Nup189 is autocatalytically cleaved in vivo in 2 polypeptides which assume different functions in the NPC. Nup98 as one of the FG repeat nucleoporins participates in karyopherin interactions and contains part of the autocatalytic cleavage activity. Nup96 as part of the NUP84 complex is involved in nuclear poly(A)+ RNA and tRNA export. The chain is Nucleoporin nup189 (nup189) from Schizosaccharomyces pombe (strain 972 / ATCC 24843) (Fission yeast).